The following is a 408-amino-acid chain: Imidazolonepropionase (408 aa).

His-73 and His-75 together coordinate Fe(3+). Residues His-73 and His-75 each contribute to the Zn(2+) site. Residues Arg-82, Tyr-145, and His-178 each contribute to the 4-imidazolone-5-propanoate site. Tyr-145 is an N-formimidoyl-L-glutamate binding site. His-243 lines the Fe(3+) pocket. His-243 is a Zn(2+) binding site. Position 246 (Gln-246) interacts with 4-imidazolone-5-propanoate. Residue Asp-318 participates in Fe(3+) binding. Asp-318 provides a ligand contact to Zn(2+). N-formimidoyl-L-glutamate-binding residues include Asn-320 and Gly-322. Ser-323 lines the 4-imidazolone-5-propanoate pocket.

Belongs to the metallo-dependent hydrolases superfamily. HutI family. Requires Zn(2+) as cofactor. The cofactor is Fe(3+).

The protein resides in the cytoplasm. The enzyme catalyses 4-imidazolone-5-propanoate + H2O = N-formimidoyl-L-glutamate. It functions in the pathway amino-acid degradation; L-histidine degradation into L-glutamate; N-formimidoyl-L-glutamate from L-histidine: step 3/3. Functionally, catalyzes the hydrolytic cleavage of the carbon-nitrogen bond in imidazolone-5-propanoate to yield N-formimidoyl-L-glutamate. It is the third step in the universal histidine degradation pathway. The sequence is that of Imidazolonepropionase from Shewanella oneidensis (strain ATCC 700550 / JCM 31522 / CIP 106686 / LMG 19005 / NCIMB 14063 / MR-1).